The sequence spans 699 residues: Proline-rich receptor-like protein kinase PERK7 (699 aa).

The segment at 1 to 167 is disordered; it reads MAEGQSPENS…TSNSGSNSSS (167 aa). Residues 1–172 lie on the Extracellular side of the membrane; sequence MAEGQSPENS…SNSSSNDGLN (172 aa). Composition is skewed to pro residues over residues 9–23 and 43–68; these read NSPPAPPPPSPPSPP and SPPPPSSPDIAPPPQQQQESPPPPLP. The N-linked (GlcNAc...) asparagine glycan is linked to N70. Over residues 100–121 the composition is skewed to low complexity; it reads PPQQSDNNGNKGNNNENNKGND. A glycan (N-linked (GlcNAc...) asparagine) is linked at N131. Polar residues predominate over residues 148–158; it reads HSQPRSLAPPT. N164 carries N-linked (GlcNAc...) asparagine glycosylation. The helical transmembrane segment at 173–193 threads the bilayer; it reads IGAVIGLVAAAGILFIVMILL. The Cytoplasmic segment spans residues 194 to 699; that stretch reads CVCCFRKKKK…SKTTTTNRGI (506 aa). Residue T325 is modified to Phosphothreonine. A Protein kinase domain is found at 336 to 615; that stretch reads FSKDRLLGQG…VRTLEGDASL (280 aa). ATP contacts are provided by residues 342–350 and K364; that span reads LGQGGFGYV. The residue at position 410 (Y410) is a Phosphotyrosine. D461 (proton acceptor) is an active-site residue. S465 and S494 each carry phosphoserine. T495 and T500 each carry phosphothreonine. The residue at position 508 (Y508) is a Phosphotyrosine. Disordered stretches follow at residues 609–639 and 658–699; these read LEGDASLDDLDDGVKPKQSSSGGEGSSDYEM and DYGA…NRGI. Over residues 687-699 the composition is skewed to polar residues; the sequence is GSTSKTTTTNRGI.

The protein belongs to the protein kinase superfamily. Ser/Thr protein kinase family. Mostly expressed in flower buds.

The protein localises to the cell membrane. It carries out the reaction L-seryl-[protein] + ATP = O-phospho-L-seryl-[protein] + ADP + H(+). It catalyses the reaction L-threonyl-[protein] + ATP = O-phospho-L-threonyl-[protein] + ADP + H(+). This Arabidopsis thaliana (Mouse-ear cress) protein is Proline-rich receptor-like protein kinase PERK7 (PERK7).